The chain runs to 51 residues: Gene 18 protein (51 aa).

Positions 24 to 51 (AAGGWKRPRKPRTTKPKPAPKQEPATEE) are disordered. The span at 29–38 (KRPRKPRTTK) shows a compositional bias: basic residues.

The protein is Gene 18 protein (18) of Mycobacterium phage D29 (Mycobacteriophage D29).